We begin with the raw amino-acid sequence, 356 residues long: Pyruvate dehydrogenase E1 component subunit beta, mitochondrial (356 aa).

A mitochondrion-targeting transit peptide spans 1 to 25 (MLSSILKKIQPSLLVNFRIITRTYA). E85 contributes to the thiamine diphosphate binding site. The K(+) site is built by I138, A186, I187, D189, and N191.

As to quaternary structure, tetramer of 2 alpha and 2 beta subunits. The cofactor is thiamine diphosphate.

Its subcellular location is the mitochondrion matrix. The enzyme catalyses N(6)-[(R)-lipoyl]-L-lysyl-[protein] + pyruvate + H(+) = N(6)-[(R)-S(8)-acetyldihydrolipoyl]-L-lysyl-[protein] + CO2. Functionally, the pyruvate dehydrogenase complex catalyzes the overall conversion of pyruvate to acetyl-CoA and CO(2). It contains multiple copies of three enzymatic components: pyruvate dehydrogenase (E1), dihydrolipoamide acetyltransferase (E2) and lipoamide dehydrogenase (E3). This chain is Pyruvate dehydrogenase E1 component subunit beta, mitochondrial (pdhB), found in Dictyostelium discoideum (Social amoeba).